A 484-amino-acid chain; its full sequence is Ectonucleoside triphosphate diphosphohydrolase 6 (484 aa).

The Cytoplasmic segment spans residues 1–39 (MKKGIRYETSRKTSYIFQQPQHGPWQTRMRKISNHGSLR). A helical; Signal-anchor for type II membrane protein transmembrane segment spans residues 40-60 (VAKVAYPLGLCVGVFIYVAYI). The Lumenal portion of the chain corresponds to 61–484 (KWHRATATQA…SLNRQKSPAS (424 aa)). A glycan (N-linked (GlcNAc...) asparagine) is linked at N220. The Proton acceptor role is filled by E224. A glycan (N-linked (GlcNAc...) asparagine) is linked at N284. Disulfide bonds link C325–C356 and C416–C430.

The protein belongs to the GDA1/CD39 NTPase family. Monomer. It depends on Ca(2+) as a cofactor. The cofactor is Mg(2+). Post-translationally, the secreted form may be produced by intracellular processing. In terms of processing, N-glycosylated. As to expression, expressed in most tissues, but predominantly in heart.

Its subcellular location is the golgi apparatus membrane. The protein localises to the secreted. It is found in the cell membrane. It carries out the reaction a ribonucleoside 5'-diphosphate + H2O = a ribonucleoside 5'-phosphate + phosphate + H(+). The catalysed reaction is IDP + H2O = IMP + phosphate + H(+). The enzyme catalyses GDP + H2O = GMP + phosphate + H(+). It catalyses the reaction UDP + H2O = UMP + phosphate + H(+). With respect to regulation, glycosylation does not appear to be required for enzymatic activity. Functionally, catalyzes the hydrolysis of nucleoside triphosphates and diphosphates in a calcium- or magnesium-dependent manner. Has a strong preference for nucleoside diphosphates, preferentially hydrolyzes GDP, IDP, and UDP, with slower hydrolysis of CDP, ITP, GTP, CTP, ADP, and UTP and virtually no hydrolysis of ATP. The membrane bound form might support glycosylation reactions in the Golgi apparatus and, when released from cells, might catalyze the hydrolysis of extracellular nucleotides. The protein is Ectonucleoside triphosphate diphosphohydrolase 6 (ENTPD6) of Homo sapiens (Human).